The following is a 136-amino-acid chain: Translation initiation factor 5A (136 aa).

Lysine 37 is subject to Hypusine.

This sequence belongs to the eIF-5A family.

It is found in the cytoplasm. Functions by promoting the formation of the first peptide bond. The chain is Translation initiation factor 5A (eIF5A) from Thermococcus onnurineus (strain NA1).